Consider the following 162-residue polypeptide: Ribosome maturation factor RimP (162 aa).

It belongs to the RimP family.

Its subcellular location is the cytoplasm. Its function is as follows. Required for maturation of 30S ribosomal subunits. The chain is Ribosome maturation factor RimP from Cupriavidus pinatubonensis (strain JMP 134 / LMG 1197) (Cupriavidus necator (strain JMP 134)).